An 85-amino-acid polypeptide reads, in one-letter code: Conotoxin Lt28.5 (85 aa).

A signal peptide spans 1–21 (MPKLEMMLLVLLILPLCYIDA). A propeptide spanning residues 22–40 (VGPPPPWNMEDEIIEHWQK) is cleaved from the precursor.

Belongs to the conotoxin D superfamily. In terms of processing, contains 5 disulfide bonds. As to expression, expressed by the venom duct.

The protein resides in the secreted. Probable neurotoxin. The chain is Conotoxin Lt28.5 from Conus litteratus (Lettered cone).